Reading from the N-terminus, the 218-residue chain is Pyridoxine/pyridoxamine 5'-phosphate oxidase (218 aa).

Substrate contacts are provided by residues 12–15 and Arg-70; that span reads RLAY. Residues 65–70, 80–81, Lys-87, and Gln-109 each bind FMN; these read RTVLLR and YT. Substrate-binding residues include Tyr-127, Arg-131, and Ser-135. FMN is bound by residues 145–146 and Trp-191; that span reads QS. Position 197–199 (197–199) interacts with substrate; sequence RLH. An FMN-binding site is contributed by Arg-201.

The protein belongs to the pyridoxamine 5'-phosphate oxidase family. Homodimer. The cofactor is FMN.

The catalysed reaction is pyridoxamine 5'-phosphate + O2 + H2O = pyridoxal 5'-phosphate + H2O2 + NH4(+). The enzyme catalyses pyridoxine 5'-phosphate + O2 = pyridoxal 5'-phosphate + H2O2. The protein operates within cofactor metabolism; pyridoxal 5'-phosphate salvage; pyridoxal 5'-phosphate from pyridoxamine 5'-phosphate: step 1/1. It participates in cofactor metabolism; pyridoxal 5'-phosphate salvage; pyridoxal 5'-phosphate from pyridoxine 5'-phosphate: step 1/1. In terms of biological role, catalyzes the oxidation of either pyridoxine 5'-phosphate (PNP) or pyridoxamine 5'-phosphate (PMP) into pyridoxal 5'-phosphate (PLP). The protein is Pyridoxine/pyridoxamine 5'-phosphate oxidase of Deinococcus geothermalis (strain DSM 11300 / CIP 105573 / AG-3a).